Here is an 836-residue protein sequence, read N- to C-terminus: Translation initiation factor IF-2 (836 aa).

Basic residues predominate over residues 1–17; it reads MLRLMRQKKLSIQRRTK. Disordered stretches follow at residues 1–43 and 83–240; these read MLRL…RTVK and AAKK…KGAA. Residues 18-27 show a composition bias toward low complexity; it reads TTVSSTTTGG. A compositionally biased stretch (basic and acidic residues) spans 83-153; the sequence is AAKKEADEKV…AAEEAKRYAE (71 aa). A compositionally biased stretch (acidic residues) spans 154–167; that stretch reads ADDSDNESSSEDYS. The span at 192–202 shows a compositional bias: basic residues; sequence RGKNKVAKAKK. Basic and acidic residues predominate over residues 203–229; it reads GGRDDENSKNSKNERESNRKNQKDAKF. One can recognise a tr-type G domain in the interval 335 to 505; the sequence is TRAPVVTIMG…LLQSEVLELT (171 aa). The segment at 344–351 is G1; it reads GHVDHGKT. GTP is bound at residue 344-351; sequence GHVDHGKT. The interval 369–373 is G2; sequence GITQH. A G3 region spans residues 391-394; that stretch reads DTPG. Residues 391–395 and 445–448 each bind GTP; these read DTPGH and NKID. A G4 region spans residues 445-448; that stretch reads NKID. The G5 stretch occupies residues 481–483; sequence SAK.

It belongs to the TRAFAC class translation factor GTPase superfamily. Classic translation factor GTPase family. IF-2 subfamily.

It localises to the cytoplasm. In terms of biological role, one of the essential components for the initiation of protein synthesis. Protects formylmethionyl-tRNA from spontaneous hydrolysis and promotes its binding to the 30S ribosomal subunits. Also involved in the hydrolysis of GTP during the formation of the 70S ribosomal complex. In Haemophilus influenzae (strain PittEE), this protein is Translation initiation factor IF-2.